We begin with the raw amino-acid sequence, 194 residues long: E3 ubiquitin-protein ligase RNF185 (194 aa).

The segment covering 1-27 has biased composition (low complexity); sequence MASAAASESSSSSSSSSAGAANGQSAG. Positions 1-32 are disordered; the sequence is MASAAASESSSSSSSSSAGAANGQSAGESGGG. The segment at 31–82 is required for ubiquitin ligase activity and protection against ER stress-induced cell death; it reads GGGAQDSTFECNICLDTSKDAVISLCGHLFCWPCLHQWLETRPNRQVCPVCK. Residues 41-82 form an RING-type zinc finger; that stretch reads CNICLDTSKDAVISLCGHLFCWPCLHQWLETRPNRQVCPVCK. Positions 92-126 are disordered; sequence PLYGRGSTGQQDPREKTPPRPQGQRPEPENRGGFQ. A run of 2 helical transmembrane segments spans residues 133 to 153 and 174 to 194; these read GGFQMSFGIGAFPFGIFATAF and QFLSRLFLFVALLIMFWLLIA.

It localises to the mitochondrion outer membrane. Its subcellular location is the endoplasmic reticulum membrane. The catalysed reaction is S-ubiquitinyl-[E2 ubiquitin-conjugating enzyme]-L-cysteine + [acceptor protein]-L-lysine = [E2 ubiquitin-conjugating enzyme]-L-cysteine + N(6)-ubiquitinyl-[acceptor protein]-L-lysine.. The protein operates within protein modification; protein ubiquitination. Functionally, E3 ubiquitin-protein ligase that regulates selective mitochondrial autophagy by mediating 'Lys-63'-linked polyubiquitination. Acts in the endoplasmic reticulum (ER)-associated degradation (ERAD) pathway, which targets misfolded proteins that accumulate in the endoplasmic reticulum (ER) for ubiquitination and subsequent proteasome-mediated degradation. Protects cells from ER stress-induced apoptosis. Responsible for the cotranslational ubiquitination and degradation of CFTR in the ERAD pathway. Also acts as a regulator of the innate antiviral response by catalyzing 'Lys-27'-linked polyubiquitination of CGAS, thereby promoting CGAS cyclic GMP-AMP synthase activity. Preferentially associates with the E2 enzymes UBE2J1 and UBE2J2. The polypeptide is E3 ubiquitin-protein ligase RNF185 (rnf185) (Danio rerio (Zebrafish)).